Consider the following 157-residue polypeptide: Small ribosomal subunit protein uS7 (157 aa).

The protein belongs to the universal ribosomal protein uS7 family. As to quaternary structure, part of the 30S ribosomal subunit. Contacts proteins S9 and S11.

In terms of biological role, one of the primary rRNA binding proteins, it binds directly to 16S rRNA where it nucleates assembly of the head domain of the 30S subunit. Is located at the subunit interface close to the decoding center, probably blocks exit of the E-site tRNA. This Herpetosiphon aurantiacus (strain ATCC 23779 / DSM 785 / 114-95) protein is Small ribosomal subunit protein uS7.